Here is a 265-residue protein sequence, read N- to C-terminus: Ribosomal RNA small subunit methyltransferase A (265 aa).

S-adenosyl-L-methionine is bound by residues histidine 11, leucine 13, glycine 38, glutamate 59, aspartate 83, and asparagine 100.

This sequence belongs to the class I-like SAM-binding methyltransferase superfamily. rRNA adenine N(6)-methyltransferase family. RsmA subfamily.

Its subcellular location is the cytoplasm. The enzyme catalyses adenosine(1518)/adenosine(1519) in 16S rRNA + 4 S-adenosyl-L-methionine = N(6)-dimethyladenosine(1518)/N(6)-dimethyladenosine(1519) in 16S rRNA + 4 S-adenosyl-L-homocysteine + 4 H(+). Functionally, specifically dimethylates two adjacent adenosines (A1518 and A1519) in the loop of a conserved hairpin near the 3'-end of 16S rRNA in the 30S particle. May play a critical role in biogenesis of 30S subunits. The sequence is that of Ribosomal RNA small subunit methyltransferase A from Thermosynechococcus vestitus (strain NIES-2133 / IAM M-273 / BP-1).